The sequence spans 156 residues: Small ribosomal subunit protein uS7 (156 aa).

It belongs to the universal ribosomal protein uS7 family. As to quaternary structure, part of the 30S ribosomal subunit. Contacts proteins S9 and S11.

Its function is as follows. One of the primary rRNA binding proteins, it binds directly to 16S rRNA where it nucleates assembly of the head domain of the 30S subunit. Is located at the subunit interface close to the decoding center, probably blocks exit of the E-site tRNA. The sequence is that of Small ribosomal subunit protein uS7 from Synechococcus sp. (strain CC9311).